The following is a 336-amino-acid chain: IgLON family member 5 (336 aa).

A signal peptide spans 1–30; sequence MPPPAPGARLRLLAAAALAGLAVISRGLLS. Ig-like C2-type domains lie at 33-122, 132-217, and 218-307; these read LEFN…QPYT, PARI…VNYP, and PTIT…MRLL. Asn41, Asn49, Asn67, and Asn137 each carry an N-linked (GlcNAc...) asparagine glycan. Cysteines 54 and 112 form a disulfide. 2 cysteine pairs are disulfide-bonded: Cys154–Cys195 and Cys238–Cys291. N-linked (GlcNAc...) asparagine glycosylation is present at Asn288.

It belongs to the immunoglobulin superfamily. IgLON family.

Its subcellular location is the secreted. The protein is IgLON family member 5 (IGLON5) of Homo sapiens (Human).